A 340-amino-acid polypeptide reads, in one-letter code: Chitinase 2 (340 aa).

The N-terminal stretch at 1-32 (MSTPRAAASLAKKAALVALAVLAAALATAARA) is a signal peptide. One can recognise a Chitin-binding type-1 domain in the interval 33–73 (EQCGAQAGGARCPNCLCCSRWGWCGTTSDFCGDGCQSQCSG). 8 disulfide bridges follow: Cys35–Cys50, Cys44–Cys56, Cys47–Cys74, Cys49–Cys63, Cys67–Cys71, Cys110–Cys172, Cys184–Cys192, and Cys291–Cys323. Residue Glu154 is the Proton donor of the active site.

The protein belongs to the glycosyl hydrolase 19 family. Chitinase class I subfamily. In terms of tissue distribution, expressed in roots, sheaths and meristems.

The catalysed reaction is Random endo-hydrolysis of N-acetyl-beta-D-glucosaminide (1-&gt;4)-beta-linkages in chitin and chitodextrins.. Hydrolyzes chitin and plays a role in defense against fungal pathogens containing chitin. Its overexpression confers enhanced resistance to sheath blight pathogen (R.solani). The sequence is that of Chitinase 2 (Cht2) from Oryza sativa subsp. japonica (Rice).